Consider the following 337-residue polypeptide: Phosphate acyltransferase (337 aa).

The protein belongs to the PlsX family. In terms of assembly, homodimer. Probably interacts with PlsY.

The protein localises to the cytoplasm. The enzyme catalyses a fatty acyl-[ACP] + phosphate = an acyl phosphate + holo-[ACP]. It functions in the pathway lipid metabolism; phospholipid metabolism. Functionally, catalyzes the reversible formation of acyl-phosphate (acyl-PO(4)) from acyl-[acyl-carrier-protein] (acyl-ACP). This enzyme utilizes acyl-ACP as fatty acyl donor, but not acyl-CoA. The protein is Phosphate acyltransferase of Ehrlichia canis (strain Jake).